A 447-amino-acid chain; its full sequence is Acyl-lipid (7-3)-desaturase (447 aa).

Positions Leu36–Ala94 constitute a Cytochrome b5 heme-binding domain. Positions 53 and 76 each coordinate heme. Helical transmembrane passes span Gly123 to Leu143, Leu154 to Asp174, and Ser185 to Leu205. A Histidine box-1 motif is present at residues His173–His177. Positions His208 to His213 match the Histidine box-2 motif. 3 helical membrane passes run Trp244–Leu264, Leu286–Leu306, and Ala315–Ile335. The Histidine box-3 motif lies at Gln386–His390.

This sequence belongs to the fatty acid desaturase type 1 family. Requires Fe(2+) as cofactor.

It is found in the membrane. It carries out the reaction a (7Z,10Z,13Z,16Z,19Z)-docosapentaenoyl-containing glycerolipid + 2 Fe(II)-[cytochrome b5] + O2 + 2 H(+) = a (4Z,7Z,10Z,13Z,16Z,19Z)-docosahexaenoyl-containing glycerolipid + 2 Fe(III)-[cytochrome b5] + 2 H2O. It catalyses the reaction a (7Z,10Z,13Z,16Z)-docosatetraenoyl-containing glycerolipid + 2 Fe(II)-[cytochrome b5] + O2 + 2 H(+) = a (4Z,7Z,10Z,13Z,16Z)-docosapentaenoyl-containing glycerolipid + 2 Fe(III)-[cytochrome b5] + 2 H2O. In terms of biological role, fatty acid desaturase that introduces a cis double bond at the 4-position in 22-carbon polyunsaturated fatty acids that contain a Delta(7) double bond, resulting in the production of delta-4 desaturated fatty acid docosahexanoic acid (DHA). This is Acyl-lipid (7-3)-desaturase from Rebecca salina (Marine microalga).